The chain runs to 251 residues: MVEDSQETTHFGFQTVAKEQKADMVAHVFHSVASKYDVMNDLMSFGIHRLWKRFTIDCSGVRRGQTVLDLAGGTGDLTAKFSRMVGETGKVILADINDSMLKMGREKLRNIGVIGNVEYVQANAEALPFPDNTFDCITISFGLRNVTEKEKALRSMFRVLKPGGRLLVLEFSKPIIEPLSKAYDAYSFHILPRIGLMVANDADSYRYLAESIRMHPDQDTLKVMMQDAGFESVDYYNLTAGVVALHRGYKF.

S-adenosyl-L-methionine-binding positions include Thr-74, Asp-95, 123-124, and Ser-140; that span reads NA.

Belongs to the class I-like SAM-binding methyltransferase superfamily. MenG/UbiE family.

It carries out the reaction a 2-demethylmenaquinol + S-adenosyl-L-methionine = a menaquinol + S-adenosyl-L-homocysteine + H(+). It catalyses the reaction a 2-methoxy-6-(all-trans-polyprenyl)benzene-1,4-diol + S-adenosyl-L-methionine = a 5-methoxy-2-methyl-3-(all-trans-polyprenyl)benzene-1,4-diol + S-adenosyl-L-homocysteine + H(+). The protein operates within quinol/quinone metabolism; menaquinone biosynthesis; menaquinol from 1,4-dihydroxy-2-naphthoate: step 2/2. Its pathway is cofactor biosynthesis; ubiquinone biosynthesis. Methyltransferase required for the conversion of demethylmenaquinol (DMKH2) to menaquinol (MKH2) and the conversion of 2-polyprenyl-6-methoxy-1,4-benzoquinol (DDMQH2) to 2-polyprenyl-3-methyl-6-methoxy-1,4-benzoquinol (DMQH2). The polypeptide is Ubiquinone/menaquinone biosynthesis C-methyltransferase UbiE (Salmonella arizonae (strain ATCC BAA-731 / CDC346-86 / RSK2980)).